The chain runs to 325 residues: HTH-type transcriptional regulator BbuR (325 aa).

The 58-residue stretch at 15–72 (LDTDLLNVFCWVAKTQSFSRAAAELGTSQPVITRKIGRLEECLGVALFVRSNRGCVLT) folds into the HTH lysR-type domain. Residues 32–51 (FSRAAAELGTSQPVITRKIG) constitute a DNA-binding region (H-T-H motif).

The protein belongs to the LysR transcriptional regulatory family.

The chain is HTH-type transcriptional regulator BbuR (bbuR) from Bordetella bronchiseptica (strain ATCC BAA-588 / NCTC 13252 / RB50) (Alcaligenes bronchisepticus).